The primary structure comprises 371 residues: NADH-ubiquinone oxidoreductase chain 1 (371 aa).

The next 10 helical transmembrane spans lie at 7-27 (IISI…VAYV), 44-64 (PNAV…KLLL), 77-97 (LFFL…AVIP), 109-129 (LGIL…LLAG), 153-173 (LVLS…NLGV), 180-200 (AVLF…GSIA), 226-246 (AVVF…MCIL), 263-283 (VFNI…NWMV), 302-322 (GWLY…IFIL), and 338-358 (FCWT…PCIL).

The protein belongs to the complex I subunit 1 family.

The protein resides in the mitochondrion inner membrane. It carries out the reaction a ubiquinone + NADH + 5 H(+)(in) = a ubiquinol + NAD(+) + 4 H(+)(out). In terms of biological role, core subunit of the mitochondrial membrane respiratory chain NADH dehydrogenase (Complex I) that is believed to belong to the minimal assembly required for catalysis. Complex I functions in the transfer of electrons from NADH to the respiratory chain. The immediate electron acceptor for the enzyme is believed to be ubiquinone. The chain is NADH-ubiquinone oxidoreductase chain 1 (ndh-1) from Neurospora crassa (strain ATCC 24698 / 74-OR23-1A / CBS 708.71 / DSM 1257 / FGSC 987).